Consider the following 83-residue polypeptide: Small integral membrane protein 22 (83 aa).

A helical membrane pass occupies residues 32–52 (VAFIVFLTFMGTVLLLLLLVV). The segment at 60 to 83 (SPGPRRESPRKERPKGVDNLALEP) is disordered. Positions 63 to 75 (PRRESPRKERPKG) are enriched in basic and acidic residues.

In terms of assembly, interacts with CANX and DDOST. Interacts with SQLE; this interaction modulates lipid droplet formation.

It is found in the membrane. The protein localises to the late endosome. In terms of biological role, may modulate lipid droplet formation throught interaction with SQLE. The chain is Small integral membrane protein 22 from Homo sapiens (Human).